Reading from the N-terminus, the 383-residue chain is DNA dC-&gt;dU-editing enzyme APOBEC-3G (383 aa).

The essential for cytoplasmic localization stretch occupies residues 1–60 (MKPQFRNTVERMYRDTFFYNFNNRPILSRRNTVWLCYEVKTRGPSMPTWDAKIFRGQVYS). CMP/dCMP-type deaminase domains lie at 29–138 (RRNT…LRVL) and 214–327 (GQHE…LRTL). Thr-32 carries the post-translational modification Phosphothreonine; by PKA. Residues His-65, Cys-97, and Cys-100 each coordinate Zn(2+). The interval 209–335 (KPWVSGQHET…TLHRDGAKIA (127 aa)) is necessary for homooligomerization. The interval 213–215 (SGQ) is interaction with DNA. A Phosphothreonine; by PKA and CAMK2 modification is found at Thr-218. His-257 contacts Zn(2+). Glu-259 functions as the Proton donor in the catalytic mechanism. The Zn(2+) site is built by Cys-287 and Cys-290. The segment at 312-319 (RIYDDQGR) is interaction with DNA.

The protein belongs to the cytidine and deoxycytidylate deaminase family. As to quaternary structure, homodimer. Zn(2+) serves as cofactor.

The protein resides in the cytoplasm. The protein localises to the nucleus. It is found in the P-body. It carries out the reaction a 2'-deoxycytidine in single-stranded DNA + H2O + H(+) = a 2'-deoxyuridine in single-stranded DNA + NH4(+). Its function is as follows. DNA deaminase (cytidine deaminase) which acts as an inhibitor of retrovirus replication and retrotransposon mobility. After the penetration of retroviral nucleocapsids into target cells of infection and the initiation of reverse transcription, it can induce the conversion of cytosine to uracil in the minus-sense single-strand viral DNA, leading to G-to-A hypermutations in the subsequent plus-strand viral DNA. The resultant detrimental levels of mutations in the proviral genome, along with a deamination-independent mechanism that works prior to the proviral integration, together exert efficient antiretroviral effects in infected target cells. Selectively targets single-stranded DNA and does not deaminate double-stranded DNA or single- or double-stranded RNA. This is DNA dC-&gt;dU-editing enzyme APOBEC-3G (APOBEC3G) from Papio anubis (Olive baboon).